The sequence spans 144 residues: uncharacterized protein (144 aa).

Residues 48-119 (ELNKLKAKAD…KETEEPKMEL (72 aa)) adopt a coiled-coil conformation.

This is an uncharacterized protein from Archaeoglobus fulgidus (strain ATCC 49558 / DSM 4304 / JCM 9628 / NBRC 100126 / VC-16).